A 231-amino-acid chain; its full sequence is Large ribosomal subunit protein uL1 (231 aa).

Belongs to the universal ribosomal protein uL1 family. In terms of assembly, part of the 50S ribosomal subunit.

Its function is as follows. Binds directly to 23S rRNA. The L1 stalk is quite mobile in the ribosome, and is involved in E site tRNA release. Protein L1 is also a translational repressor protein, it controls the translation of the L11 operon by binding to its mRNA. This Pseudomonas entomophila (strain L48) protein is Large ribosomal subunit protein uL1.